We begin with the raw amino-acid sequence, 70 residues long: Cold shock-like protein CspF (70 aa).

In terms of domain architecture, CSD spans 7–67; the sequence is GIVKTFDGKS…GLRGPSAANV (61 aa).

It is found in the cytoplasm. The polypeptide is Cold shock-like protein CspF (cspF) (Escherichia coli (strain K12)).